Consider the following 1904-residue polypeptide: Fatty acid synthase beta subunit hexB (1904 aa).

An acetyltransferase (AT) domain region spans residues 24 to 395 (LSVAFGGQGP…TEGTGVRVIQ (372 aa)). The tract at residues 447 to 691 (TQLLNAPPVM…LIVQTEGVGD (245 aa)) is enoyl reductase (ER) domain. The tract at residues 1001–1491 (GPAADCWTHH…RPNDRLKIQL (491 aa)) is dehydratase (DH) domain. One can recognise a MaoC-like domain in the interval 1399 to 1512 (PGWNEGSTVL…MKVQAFNDET (114 aa)). The interval 1530–1893 (YVFCGQGSQE…IEHVQSVTGS (364 aa)) is malonyl/palmitoyl transferase (MT/PT) domain.

This sequence belongs to the fungal fatty acid synthetase subunit beta family. In terms of assembly, [Alpha(6)beta(6)] hexamers of two multifunctional subunits (alpha and beta).

The catalysed reaction is acetyl-CoA + n malonyl-CoA + 2n NADPH + 4n H(+) = a long-chain-acyl-CoA + n CoA + n CO2 + 2n NADP(+).. It catalyses the reaction holo-[ACP] + acetyl-CoA = acetyl-[ACP] + CoA. It carries out the reaction holo-[ACP] + malonyl-CoA = malonyl-[ACP] + CoA. The enzyme catalyses a (3R)-hydroxyacyl-[ACP] = a (2E)-enoyl-[ACP] + H2O. The catalysed reaction is a 2,3-saturated acyl-[ACP] + NAD(+) = a (2E)-enoyl-[ACP] + NADH + H(+). It catalyses the reaction (9Z)-octadecenoyl-[ACP] + H2O = (9Z)-octadecenoate + holo-[ACP] + H(+). The protein operates within mycotoxin biosynthesis. Fatty acid synthase beta subunit; part of the fragmented gene cluster that mediates the biosynthesis of dothistromin (DOTH), a polyketide toxin very similar in structure to the aflatoxin precursor, versicolorin B. The first step of the pathway is the conversion of acetate to norsolorinic acid (NOR) and requires the fatty acid synthase subunits hexA and hexB, as well as the polyketide synthase pksA. PksA combines a hexanoyl starter unit and 7 malonyl-CoA extender units to synthesize the precursor NOR. The hexanoyl starter unit is provided to the acyl-carrier protein (ACP) domain by the fungal fatty acid synthase hexA/hexB. The second step is the conversion of NOR to averantin (AVN) and requires the norsolorinic acid ketoreductase nor1, which catalyzes the dehydration of norsolorinic acid to form (1'S)-averantin. The cytochrome P450 monooxygenase avnA then catalyzes the hydroxylation of AVN to 5'hydroxyaverantin (HAVN). The next step is performed by adhA that transforms HAVN to averufin (AVF). Averufin might then be converted to hydroxyversicolorone by cypX and avfA. Hydroxyversicolorone is further converted versiconal hemiacetal acetate (VHA) by moxY. VHA is then the substrate for the versiconal hemiacetal acetate esterase est1 to yield versiconal (VAL). Versicolorin B synthase vbsA then converts VAL to versicolorin B (VERB) by closing the bisfuran ring. Then, the activity of the versicolorin B desaturase verB leads to versicolorin A (VERA). DotB, a predicted chloroperoxidase, may perform epoxidation of the A-ring of VERA. Alternatively, a cytochrome P450, such as cypX or avnA could catalyze this step. It is also possible that another, uncharacterized, cytochrome P450 enzyme is responsible for this step. Opening of the epoxide could potentially be achieved by the epoxide hydrolase epoA. However, epoA seems not to be required for DOTH biosynthesis, but other epoxide hydrolases may have the ability to complement this hydrolysis. Alternatively, opening of the epoxide ring could be achieved non-enzymatically. The next step is the deoxygenation of ring A to yield the 5,8-dihydroxyanthraquinone which is most likely catalyzed by the NADPH dehydrogenase encoded by ver1. The last stages of DOTH biosynthesis are proposed to involve hydroxylation of the bisfuran. OrdB and norB might have oxidative roles here. An alternative possibility is that cytochrome P450 monoogenases such as avnA and cypX might perform these steps in addition to previously proposed steps. This chain is Fatty acid synthase beta subunit hexB, found in Dothistroma septosporum (strain NZE10 / CBS 128990) (Red band needle blight fungus).